Reading from the N-terminus, the 269-residue chain is 4-hydroxy-tetrahydrodipicolinate reductase (269 aa).

Residues G8–M13 and E34 contribute to the NAD(+) site. Position 35 (R35) interacts with NADP(+). Residues G98 to T100 and A122 to Y125 each bind NAD(+). H155 serves as the catalytic Proton donor/acceptor. H156 serves as a coordination point for (S)-2,3,4,5-tetrahydrodipicolinate. K159 serves as the catalytic Proton donor. G165–T166 serves as a coordination point for (S)-2,3,4,5-tetrahydrodipicolinate.

This sequence belongs to the DapB family.

Its subcellular location is the cytoplasm. It catalyses the reaction (S)-2,3,4,5-tetrahydrodipicolinate + NAD(+) + H2O = (2S,4S)-4-hydroxy-2,3,4,5-tetrahydrodipicolinate + NADH + H(+). The enzyme catalyses (S)-2,3,4,5-tetrahydrodipicolinate + NADP(+) + H2O = (2S,4S)-4-hydroxy-2,3,4,5-tetrahydrodipicolinate + NADPH + H(+). It functions in the pathway amino-acid biosynthesis; L-lysine biosynthesis via DAP pathway; (S)-tetrahydrodipicolinate from L-aspartate: step 4/4. Its function is as follows. Catalyzes the conversion of 4-hydroxy-tetrahydrodipicolinate (HTPA) to tetrahydrodipicolinate. The chain is 4-hydroxy-tetrahydrodipicolinate reductase from Vibrio vulnificus (strain CMCP6).